Here is a 1481-residue protein sequence, read N- to C-terminus: Neuropathy target esterase sws (1481 aa).

Residues 1–34 lie on the Lumenal side of the membrane; the sequence is MDVLELLRASANGCYNTIFSDAWSQYVSQQITSS. The chain crosses the membrane as a helical span at residues 35 to 55; it reads LYLYIALGILTVLFVAWFIYF. At 56–1481 the chain is on the cytoplasmic side; sequence KRLARLRLRD…KENKNVNTKN (1426 aa). A nucleoside 3',5'-cyclic phosphate is bound at residue 175 to 302; it reads IFGHFEKPVF…IRVIQVIMIR (128 aa). Residues 336–420 form a disordered region; sequence HLNSQSQSSQ…NNVQLPEVHG (85 aa). Low complexity-rich tracts occupy residues 339–379 and 401–412; these read SQSQ…LPLQ and SGPNPNPNSGNN. Ser-448 bears the Phosphoserine mark. A nucleoside 3',5'-cyclic phosphate-binding positions include 492–624 and 613–740; these read ELGL…VVRR and IVLD…LSHR. The 167-residue stretch at 967–1133 folds into the PNPLA domain; that stretch reads LVLGGGGARG…VNNLPGHLWR (167 aa). The GXGXXG signature appears at 971-976; it reads GGGARG. Residues 998-1002 carry the GXSXG motif; that stretch reads GVSIG. Ser-1000 acts as the Nucleophile in catalysis. Asp-1120 (proton acceptor) is an active-site residue. Residues 1120 to 1122 carry the DGA/G motif; sequence DGG. Ser-1214 carries the post-translational modification Phosphoserine. The tract at residues 1366-1481 is disordered; the sequence is LSLSEAEMDS…KENKNVNTKN (116 aa). Basic and acidic residues-rich tracts occupy residues 1379 to 1390 and 1400 to 1410; these read IDFRSDSKKDKA and KDNEDKTDAVD. Positions 1445–1457 are enriched in low complexity; the sequence is TNTMTTQTTSPTT.

It belongs to the NTE family. In terms of assembly, interacts with Pka-C3; interaction inhibits the catalytic function of Pka-C3 and the esterase activity of sws.

The protein resides in the endoplasmic reticulum membrane. It carries out the reaction a 1-acyl-sn-glycero-3-phosphocholine + H2O = sn-glycerol 3-phosphocholine + a fatty acid + H(+). In terms of biological role, phospholipase B that deacylates intracellular phosphatidylcholine (PtdCho), generating glycerophosphocholine (GroPtdCho). This deacylation occurs at both sn-2 and sn-1 positions of PtdCho. Its specific chemical modification by certain organophosphorus (OP) compounds leads to distal axonopathy. Plays a role in the signaling mechanism between neurons and glia that regulates glia wrapping during development of the adult brain. Essential for membrane lipid homeostasis and cell survival in both neurons and glia of the adult brain. The protein is Neuropathy target esterase sws of Drosophila willistoni (Fruit fly).